A 238-amino-acid polypeptide reads, in one-letter code: uncharacterized protein (238 aa).

6 consecutive transmembrane segments (helical) span residues 24–44, 78–98, 109–129, 156–176, 188–208, and 216–236; these read IFIA…YMKN, GFLL…LPGL, ILFI…IILV, FILL…IQVI, MYAY…IITP, and IIMS…LKIL.

Belongs to the TatC family.

It is found in the plastid. Its subcellular location is the chloroplast membrane. This is an uncharacterized protein from Gracilaria tenuistipitata var. liui (Red alga).